Consider the following 104-residue polypeptide: Pyrimidine/purine nucleoside phosphorylase (104 aa).

This sequence belongs to the nucleoside phosphorylase PpnP family.

The enzyme catalyses a purine D-ribonucleoside + phosphate = a purine nucleobase + alpha-D-ribose 1-phosphate. It carries out the reaction adenosine + phosphate = alpha-D-ribose 1-phosphate + adenine. It catalyses the reaction cytidine + phosphate = cytosine + alpha-D-ribose 1-phosphate. The catalysed reaction is guanosine + phosphate = alpha-D-ribose 1-phosphate + guanine. The enzyme catalyses inosine + phosphate = alpha-D-ribose 1-phosphate + hypoxanthine. It carries out the reaction thymidine + phosphate = 2-deoxy-alpha-D-ribose 1-phosphate + thymine. It catalyses the reaction uridine + phosphate = alpha-D-ribose 1-phosphate + uracil. The catalysed reaction is xanthosine + phosphate = alpha-D-ribose 1-phosphate + xanthine. Functionally, catalyzes the phosphorolysis of diverse nucleosides, yielding D-ribose 1-phosphate and the respective free bases. Can use uridine, adenosine, guanosine, cytidine, thymidine, inosine and xanthosine as substrates. Also catalyzes the reverse reactions. This Geobacter sulfurreducens (strain ATCC 51573 / DSM 12127 / PCA) protein is Pyrimidine/purine nucleoside phosphorylase.